Consider the following 160-residue polypeptide: ATP synthase subunit delta, mitochondrial (160 aa).

The transit peptide at 1-22 directs the protein to the mitochondrion; sequence MFRQSLRSIARTRTGTIGVRTY.

F-type ATP synthases have 2 components, the catalytic core F(1) and the membrane-embedded component F(0), linked together by a central stalk and a peripheral stalk. The central stalk, also called rotor shaft, is often seen as part of F(1). The peripheral stalk is seen as part of F(0). F(0) contains the membrane channel next to the rotor. F-type ATP synthases form dimers but each monomer functions independently in ATP generation. The dimer consists of 18 different polypeptides: ATP1 (subunit alpha, part of F(1), 3 molecules per monomer), ATP2 (subunit beta, part of F(1), 3 molecules per monomer), ATP3 (subunit gamma, part of the central stalk), ATP4 (subunit b, part of the peripheral stalk), ATP5/OSCP (subunit 5/OSCP, part of the peripheral stalk), ATP6 (subunit a, part of the peripheral stalk), ATP7 (subunit d, part of the peripheral stalk), ATP8 (subunit 8, part of the peripheral stalk), OLI1 (subunit c, part of the rotor, 10 molecules per monomer), ATP14 (subunit h, part of the peripheral stalk), ATP15 (subunit epsilon, part of the central stalk), ATP16 (subunit delta, part of the central stalk), ATP17 (subunit f, part of the peripheral stalk), ATP18 (subunit i/j, part of the peripheral stalk). Dimer-specific subunits are ATP19 (subunit k, at interface between monomers), ATP20 (subunit g, at interface between monomers), TIM11 (subunit e, at interface between monomers). Also contains subunit L.

It is found in the mitochondrion inner membrane. Mitochondrial membrane ATP synthase (F(1)F(0) ATP synthase or Complex V) produces ATP from ADP in the presence of a proton gradient across the membrane which is generated by electron transport complexes of the respiratory chain. F-type ATP synthases consist of two structural domains, F(1) - containing the extramembraneous catalytic core, and F(0) - containing the membrane proton channel, linked together by a central stalk and a peripheral stalk. During catalysis, ATP synthesis in the catalytic domain of F(1) is coupled via a rotary mechanism of the central stalk subunits to proton translocation. Part of the complex F(1) domain and the central stalk which is part of the complex rotary element. Rotation of the central stalk against the surrounding alpha/ATP1(3)beta/ATP2(3) subunits leads to hydrolysis of ATP in three separate catalytic sites on the beta/ATP2 subunits. This Pichia angusta (Yeast) protein is ATP synthase subunit delta, mitochondrial.